The following is a 591-amino-acid chain: Isocitrate dehydrogenase kinase/phosphatase (591 aa).

ATP-binding positions include 315–321 (APGVKGM) and Lys-336. Residue Asp-371 is part of the active site.

The protein belongs to the AceK family.

The protein localises to the cytoplasm. It carries out the reaction L-seryl-[isocitrate dehydrogenase] + ATP = O-phospho-L-seryl-[isocitrate dehydrogenase] + ADP + H(+). In terms of biological role, bifunctional enzyme which can phosphorylate or dephosphorylate isocitrate dehydrogenase (IDH) on a specific serine residue. This is a regulatory mechanism which enables bacteria to bypass the Krebs cycle via the glyoxylate shunt in response to the source of carbon. When bacteria are grown on glucose, IDH is fully active and unphosphorylated, but when grown on acetate or ethanol, the activity of IDH declines drastically concomitant with its phosphorylation. In Pectobacterium carotovorum subsp. carotovorum (strain PC1), this protein is Isocitrate dehydrogenase kinase/phosphatase.